A 123-amino-acid chain; its full sequence is Small ribosomal subunit protein uS12 (123 aa).

The segment at 1 to 45 (MPTINQLIRKKRQSGATRKKSPALQKSPQKRGVCLQVKTKTPKKP) is disordered. Basic residues predominate over residues 8-21 (IRKKRQSGATRKKS).

The protein belongs to the universal ribosomal protein uS12 family. In terms of assembly, part of the 30S ribosomal subunit. Contacts proteins S8 and S17. May interact with IF1 in the 30S initiation complex.

Functionally, with S4 and S5 plays an important role in translational accuracy. Interacts with and stabilizes bases of the 16S rRNA that are involved in tRNA selection in the A site and with the mRNA backbone. Located at the interface of the 30S and 50S subunits, it traverses the body of the 30S subunit contacting proteins on the other side and probably holding the rRNA structure together. The combined cluster of proteins S8, S12 and S17 appears to hold together the shoulder and platform of the 30S subunit. This Chlamydia muridarum (strain MoPn / Nigg) protein is Small ribosomal subunit protein uS12.